The chain runs to 312 residues: Protoheme IX farnesyltransferase 1 (312 aa).

9 consecutive transmembrane segments (helical) span residues 21–41 (GVLA…LLVT), 53–73 (IPSP…AGSA), 105–125 (SALV…ALGA), 127–147 (LLAA…YTLV), 156–176 (IVWG…AVTG), 182–202 (ALVM…SLAM), 225–245 (VSAR…LLVP), 246–266 (ATSW…LIVA), and 292–312 (LALL…SFVA).

The protein belongs to the UbiA prenyltransferase family. Protoheme IX farnesyltransferase subfamily.

The protein resides in the cell membrane. It carries out the reaction heme b + (2E,6E)-farnesyl diphosphate + H2O = Fe(II)-heme o + diphosphate. It participates in porphyrin-containing compound metabolism; heme O biosynthesis; heme O from protoheme: step 1/1. Functionally, converts heme B (protoheme IX) to heme O by substitution of the vinyl group on carbon 2 of heme B porphyrin ring with a hydroxyethyl farnesyl side group. The protein is Protoheme IX farnesyltransferase 1 of Saccharopolyspora erythraea (strain ATCC 11635 / DSM 40517 / JCM 4748 / NBRC 13426 / NCIMB 8594 / NRRL 2338).